The sequence spans 507 residues: Protoheme IX farnesyltransferase, mitochondrial (507 aa).

The span at 72–90 shows a compositional bias: low complexity; sequence STSASASTTHDSTLSSSPT. Positions 72–136 are disordered; sequence STSASASTTH…RGEKPLPPDA (65 aa). The segment covering 99–111 has biased composition (basic residues); sequence KDHKIAPHRKRQA. 8 helical membrane-spanning segments follow: residues 166 to 186, 199 to 219, 248 to 268, 270 to 290, 298 to 318, 339 to 359, 392 to 412, and 441 to 461; these read LTML…VPEM, PLTL…ANAL, AAVL…YFGV, PTVS…YTPL, TWIG…AAAG, IGGW…FMAL, FVFI…WSFA, and GLFW…LLHK.

This sequence belongs to the UbiA prenyltransferase family.

The protein localises to the mitochondrion membrane. It carries out the reaction heme b + (2E,6E)-farnesyl diphosphate + H2O = Fe(II)-heme o + diphosphate. Converts protoheme IX and farnesyl diphosphate to heme O. In Gibberella zeae (strain ATCC MYA-4620 / CBS 123657 / FGSC 9075 / NRRL 31084 / PH-1) (Wheat head blight fungus), this protein is Protoheme IX farnesyltransferase, mitochondrial (COX10).